Here is a 397-residue protein sequence, read N- to C-terminus: Acetate kinase (397 aa).

Asn8 provides a ligand contact to Mg(2+). ATP is bound at residue Lys15. Substrate is bound at residue Arg89. Asp146 acts as the Proton donor/acceptor in catalysis. ATP-binding positions include 206–210, 280–282, and 328–332; these read HLGNG, DMR, and GVGEN. Residue Glu382 participates in Mg(2+) binding.

It belongs to the acetokinase family. Homodimer. Mg(2+) serves as cofactor. Requires Mn(2+) as cofactor.

It is found in the cytoplasm. It carries out the reaction acetate + ATP = acetyl phosphate + ADP. It participates in metabolic intermediate biosynthesis; acetyl-CoA biosynthesis; acetyl-CoA from acetate: step 1/2. Functionally, catalyzes the formation of acetyl phosphate from acetate and ATP. Can also catalyze the reverse reaction. This is Acetate kinase from Leifsonia xyli subsp. xyli (strain CTCB07).